A 130-amino-acid polypeptide reads, in one-letter code: Small ribosomal subunit protein uS8 (130 aa).

It belongs to the universal ribosomal protein uS8 family. As to quaternary structure, part of the 30S ribosomal subunit. Contacts proteins S5 and S12.

Its function is as follows. One of the primary rRNA binding proteins, it binds directly to 16S rRNA central domain where it helps coordinate assembly of the platform of the 30S subunit. This Proteus mirabilis (strain HI4320) protein is Small ribosomal subunit protein uS8.